A 108-amino-acid polypeptide reads, in one-letter code: UPF0060 membrane protein Mfla_0485 (108 aa).

4 helical membrane-spanning segments follow: residues 7–27 (FSLF…PYLW), 33–53 (SVWL…LLSL), 63–83 (AAYG…VDGI), and 87–107 (TWDF…MFAP).

The protein belongs to the UPF0060 family.

It is found in the cell inner membrane. The polypeptide is UPF0060 membrane protein Mfla_0485 (Methylobacillus flagellatus (strain ATCC 51484 / DSM 6875 / VKM B-1610 / KT)).